Consider the following 191-residue polypeptide: Peptidyl-tRNA hydrolase (191 aa).

Tyr-14 is a tRNA binding site. The Proton acceptor role is filled by His-19. TRNA-binding residues include Tyr-64, Asn-66, and Asn-112.

Belongs to the PTH family. In terms of assembly, monomer.

It localises to the cytoplasm. The enzyme catalyses an N-acyl-L-alpha-aminoacyl-tRNA + H2O = an N-acyl-L-amino acid + a tRNA + H(+). Its function is as follows. Hydrolyzes ribosome-free peptidyl-tRNAs (with 1 or more amino acids incorporated), which drop off the ribosome during protein synthesis, or as a result of ribosome stalling. Catalyzes the release of premature peptidyl moieties from peptidyl-tRNA molecules trapped in stalled 50S ribosomal subunits, and thus maintains levels of free tRNAs and 50S ribosomes. The protein is Peptidyl-tRNA hydrolase of Lachnoclostridium phytofermentans (strain ATCC 700394 / DSM 18823 / ISDg) (Clostridium phytofermentans).